The chain runs to 1315 residues: DNA-directed RNA polymerase subunit beta' (1315 aa).

Residues Cys60, Cys62, Cys75, and Cys78 each coordinate Zn(2+). Mg(2+)-binding residues include Asp535, Asp537, and Asp539. Residues Cys890, Cys967, Cys974, and Cys977 each coordinate Zn(2+).

This sequence belongs to the RNA polymerase beta' chain family. The RNAP catalytic core consists of 2 alpha, 1 beta, 1 beta' and 1 omega subunit. When a sigma factor is associated with the core the holoenzyme is formed, which can initiate transcription. The cofactor is Mg(2+). It depends on Zn(2+) as a cofactor.

It catalyses the reaction RNA(n) + a ribonucleoside 5'-triphosphate = RNA(n+1) + diphosphate. DNA-dependent RNA polymerase catalyzes the transcription of DNA into RNA using the four ribonucleoside triphosphates as substrates. The chain is DNA-directed RNA polymerase subunit beta' from Mycobacterium sp. (strain MCS).